The primary structure comprises 1036 residues: Mediator of RNA polymerase II transcription subunit 24 (1036 aa).

This sequence belongs to the Mediator complex subunit 24 family. In terms of assembly, component of the Mediator complex.

Its subcellular location is the nucleus. Functionally, component of the Mediator complex, a coactivator involved in the regulated transcription of nearly all RNA polymerase II-dependent genes. Mediator functions as a bridge to convey information from gene-specific regulatory proteins to the basal RNA polymerase II transcription machinery. Mediator is recruited to promoters by direct interactions with regulatory proteins and serves as a scaffold for the assembly of a functional preinitiation complex with RNA polymerase II and the general transcription factors. This chain is Mediator of RNA polymerase II transcription subunit 24 (MED24), found in Anopheles gambiae (African malaria mosquito).